Consider the following 339-residue polypeptide: HTH-type transcriptional regulator SyrM 2 (339 aa).

An HTH lysR-type domain is found at 32–89; it reads VDLNLLVELEALLQYRNITHAAQHVGRSQPAMSRALSRLRDMFNDDLLVRGSSGLVPT. A DNA-binding region (H-T-H motif) is located at residues 49-68; the sequence is ITHAAQHVGRSQPAMSRALS.

Belongs to the LysR transcriptional regulatory family.

Its function is as follows. Acts in trans to stimulate nod gene expression. The protein is HTH-type transcriptional regulator SyrM 2 (syrM2) of Sinorhizobium fredii (strain NBRC 101917 / NGR234).